A 688-amino-acid polypeptide reads, in one-letter code: Elongation factor G (688 aa).

The tr-type G domain maps to E8 to C282. Residues A17–T24, D81–H85, and N135–D138 contribute to the GTP site.

This sequence belongs to the TRAFAC class translation factor GTPase superfamily. Classic translation factor GTPase family. EF-G/EF-2 subfamily.

It is found in the cytoplasm. Functionally, catalyzes the GTP-dependent ribosomal translocation step during translation elongation. During this step, the ribosome changes from the pre-translocational (PRE) to the post-translocational (POST) state as the newly formed A-site-bound peptidyl-tRNA and P-site-bound deacylated tRNA move to the P and E sites, respectively. Catalyzes the coordinated movement of the two tRNA molecules, the mRNA and conformational changes in the ribosome. The sequence is that of Elongation factor G from Aster yellows witches'-broom phytoplasma (strain AYWB).